Consider the following 711-residue polypeptide: DNA topoisomerase 3 (711 aa).

The Toprim domain occupies 2–135 (KSLILAEKPS…IKRLWISSVT (134 aa)). Residues Glu-8 and Asp-104 each coordinate Mg(2+). The region spanning 152–580 (FQHLYEAALA…EMKAFTQSIV (429 aa)) is the Topo IA-type catalytic domain. Residues 186–191 (SLGRVQ) are interaction with DNA. The active-site O-(5'-phospho-DNA)-tyrosine intermediate is the Tyr-305. A disordered region spans residues 672–699 (KRFKNKSSGKVSKKEMKKYMNNEDSLEN). A compositionally biased stretch (basic and acidic residues) spans 683–692 (SKKEMKKYMN).

This sequence belongs to the type IA topoisomerase family. Mg(2+) is required as a cofactor.

It carries out the reaction ATP-independent breakage of single-stranded DNA, followed by passage and rejoining.. Functionally, releases the supercoiling and torsional tension of DNA, which is introduced during the DNA replication and transcription, by transiently cleaving and rejoining one strand of the DNA duplex. Introduces a single-strand break via transesterification at a target site in duplex DNA. The scissile phosphodiester is attacked by the catalytic tyrosine of the enzyme, resulting in the formation of a DNA-(5'-phosphotyrosyl)-enzyme intermediate and the expulsion of a 3'-OH DNA strand. The free DNA strand then undergoes passage around the unbroken strand, thus removing DNA supercoils. Finally, in the religation step, the DNA 3'-OH attacks the covalent intermediate to expel the active-site tyrosine and restore the DNA phosphodiester backbone. The polypeptide is DNA topoisomerase 3 (Staphylococcus haemolyticus (strain JCSC1435)).